A 116-amino-acid chain; its full sequence is Cell division protein FtsL (116 aa).

At 1–24 (MMLTNRQIRVRLFESLKNSFFKKT) the chain is on the cytoplasmic side. The chain crosses the membrane as a helical span at residues 25 to 45 (VGISFALLFILLITAFSLIVV). At 46–116 (RFEYKLQLNE…NEQKEELNNE (71 aa)) the chain is on the periplasmic side.

The protein belongs to the FtsL family. Part of a complex composed of FtsB, FtsL and FtsQ.

It is found in the cell inner membrane. Its function is as follows. Essential cell division protein. May link together the upstream cell division proteins, which are predominantly cytoplasmic, with the downstream cell division proteins, which are predominantly periplasmic. In Francisella tularensis subsp. tularensis (strain SCHU S4 / Schu 4), this protein is Cell division protein FtsL.